We begin with the raw amino-acid sequence, 201 residues long: Small ribosomal subunit protein uS4 (201 aa).

An S4 RNA-binding domain is found at Ser-91 to Glu-151.

Belongs to the universal ribosomal protein uS4 family. As to quaternary structure, part of the 30S ribosomal subunit. Contacts protein S5. The interaction surface between S4 and S5 is involved in control of translational fidelity.

Its function is as follows. One of the primary rRNA binding proteins, it binds directly to 16S rRNA where it nucleates assembly of the body of the 30S subunit. In terms of biological role, with S5 and S12 plays an important role in translational accuracy. The sequence is that of Small ribosomal subunit protein uS4 from Corynebacterium glutamicum (strain R).